Reading from the N-terminus, the 373-residue chain is S-adenosylmethionine:tRNA ribosyltransferase-isomerase (373 aa).

It belongs to the QueA family. In terms of assembly, monomer.

It is found in the cytoplasm. It carries out the reaction 7-aminomethyl-7-carbaguanosine(34) in tRNA + S-adenosyl-L-methionine = epoxyqueuosine(34) in tRNA + adenine + L-methionine + 2 H(+). The protein operates within tRNA modification; tRNA-queuosine biosynthesis. Functionally, transfers and isomerizes the ribose moiety from AdoMet to the 7-aminomethyl group of 7-deazaguanine (preQ1-tRNA) to give epoxyqueuosine (oQ-tRNA). The polypeptide is S-adenosylmethionine:tRNA ribosyltransferase-isomerase (Prochlorococcus marinus (strain MIT 9515)).